The primary structure comprises 225 residues: ATP-dependent Clp protease proteolytic subunit (225 aa).

The active-site Nucleophile is Ser-126. His-151 is an active-site residue.

The protein belongs to the peptidase S14 family. In terms of assembly, fourteen ClpP subunits assemble into 2 heptameric rings which stack back to back to give a disk-like structure with a central cavity, resembling the structure of eukaryotic proteasomes.

Its subcellular location is the cytoplasm. The catalysed reaction is Hydrolysis of proteins to small peptides in the presence of ATP and magnesium. alpha-casein is the usual test substrate. In the absence of ATP, only oligopeptides shorter than five residues are hydrolyzed (such as succinyl-Leu-Tyr-|-NHMec, and Leu-Tyr-Leu-|-Tyr-Trp, in which cleavage of the -Tyr-|-Leu- and -Tyr-|-Trp bonds also occurs).. Its function is as follows. Cleaves peptides in various proteins in a process that requires ATP hydrolysis. Has a chymotrypsin-like activity. Plays a major role in the degradation of misfolded proteins. The polypeptide is ATP-dependent Clp protease proteolytic subunit (Psychrobacter arcticus (strain DSM 17307 / VKM B-2377 / 273-4)).